The chain runs to 196 residues: GTP cyclohydrolase 1 (196 aa).

Residues Cys86, His89, and Cys158 each contribute to the Zn(2+) site.

Belongs to the GTP cyclohydrolase I family. Toroid-shaped homodecamer, composed of two pentamers of five dimers.

It carries out the reaction GTP + H2O = 7,8-dihydroneopterin 3'-triphosphate + formate + H(+). It functions in the pathway cofactor biosynthesis; 7,8-dihydroneopterin triphosphate biosynthesis; 7,8-dihydroneopterin triphosphate from GTP: step 1/1. This is GTP cyclohydrolase 1 from Clostridium botulinum (strain ATCC 19397 / Type A).